We begin with the raw amino-acid sequence, 285 residues long: Iron uptake system component EfeM (285 aa).

An N-terminal signal peptide occupies residues 1-34 (MTYPLLTRKTLMKKTPLALLLTLGLLQTPLAAFA).

Belongs to the EfeM/EfeO family. Component of the iron transporter efeUOB/M complex composed of EfeU, EfeM and EfeB.

The protein localises to the periplasm. Part of the iron transporter system efeUOB/M involved in iron import. Specifically binds Fe(3+), which is produced by EfeB-mediated oxidation of Fe(2+), and delivers it to the cell inner membrane permease EfeU. Also binds Zn(2+) and Cu(2+) in vitro. The protein is Iron uptake system component EfeM of Pseudomonas syringae pv. syringae (strain B728a).